A 197-amino-acid chain; its full sequence is MRLARPLENLIDQLLKLPGIGPKTAQRLALYILKLPEMEARQLAQAIVDCRQKVFPCSRCGYLTDFDPCLICSDESRDKSLICIGEESSDVIAIERTGFRGQYFVLNKDFNLMEDKGLEDLNLKPLEDRLATGEIKEVVLALNPDMDGEVMSRFLATVAGSFGVKVTRLAHGLPVGGDIEFADEITLRRALEGRKEL.

The C4-type zinc finger occupies 57 to 72 (CSRCGYLTDFDPCLIC). The region spanning 80–174 (SLICIGEESS…KVTRLAHGLP (95 aa)) is the Toprim domain.

This sequence belongs to the RecR family.

Its function is as follows. May play a role in DNA repair. It seems to be involved in an RecBC-independent recombinational process of DNA repair. It may act with RecF and RecO. This is Recombination protein RecR from Syntrophomonas wolfei subsp. wolfei (strain DSM 2245B / Goettingen).